Reading from the N-terminus, the 413-residue chain is Coiled-coil domain-containing protein 83 (413 aa).

Coiled coils occupy residues 32–186 (HCQI…RIIR) and 215–255 (IWEN…QLFN).

The protein is Coiled-coil domain-containing protein 83 (CCDC83) of Bos taurus (Bovine).